We begin with the raw amino-acid sequence, 333 residues long: Geminin coiled-coil domain-containing protein 1 (333 aa).

Positions 83 to 118 (QLYRNKQLQDTLLQKEEELARLHEENNHLRQYLNST) form a coiled coil. Residues 145-154 (KEKRKPKEHR) show a composition bias toward basic residues. A disordered region spans residues 145–165 (KEKRKPKEHRHSPAEIPQFKT).

The protein belongs to the GEMC1 family. In terms of processing, highly phosphorylated by CDK2; stimulates initiation of DNA replication.

It is found in the nucleus. In terms of biological role, regulator of DNA replication. Promotes initiation of chromosomal DNA replication by mediating TOPBP1- and CDK2-dependent recruitment of CDC45L onto replication origins. This Mus musculus (Mouse) protein is Geminin coiled-coil domain-containing protein 1 (Gmnc).